The following is a 461-amino-acid chain: 3-isopropylmalate dehydratase large subunit (461 aa).

[4Fe-4S] cluster is bound by residues cysteine 338, cysteine 398, and cysteine 401.

The protein belongs to the aconitase/IPM isomerase family. LeuC type 1 subfamily. In terms of assembly, heterodimer of LeuC and LeuD. It depends on [4Fe-4S] cluster as a cofactor.

The enzyme catalyses (2R,3S)-3-isopropylmalate = (2S)-2-isopropylmalate. Its pathway is amino-acid biosynthesis; L-leucine biosynthesis; L-leucine from 3-methyl-2-oxobutanoate: step 2/4. Functionally, catalyzes the isomerization between 2-isopropylmalate and 3-isopropylmalate, via the formation of 2-isopropylmaleate. The protein is 3-isopropylmalate dehydratase large subunit of Streptococcus mutans serotype c (strain ATCC 700610 / UA159).